Reading from the N-terminus, the 192-residue chain is Fe/S biogenesis protein NfuA (192 aa).

C149 and C152 together coordinate [4Fe-4S] cluster.

This sequence belongs to the NfuA family. Homodimer. Requires [4Fe-4S] cluster as cofactor.

Functionally, involved in iron-sulfur cluster biogenesis. Binds a 4Fe-4S cluster, can transfer this cluster to apoproteins, and thereby intervenes in the maturation of Fe/S proteins. Could also act as a scaffold/chaperone for damaged Fe/S proteins. This Aeromonas hydrophila subsp. hydrophila (strain ATCC 7966 / DSM 30187 / BCRC 13018 / CCUG 14551 / JCM 1027 / KCTC 2358 / NCIMB 9240 / NCTC 8049) protein is Fe/S biogenesis protein NfuA.